The primary structure comprises 604 residues: Glutamine--fructose-6-phosphate aminotransferase [isomerizing] (604 aa).

Cys2 serves as the catalytic Nucleophile; for GATase activity. Positions 2 to 219 (CGIMGAVSER…EGDSACVTTQ (218 aa)) constitute a Glutamine amidotransferase type-2 domain. SIS domains lie at 279-427 (LRAS…DNRA) and 454-594 (LASL…VDQP). Catalysis depends on Lys599, which acts as the For Fru-6P isomerization activity.

As to quaternary structure, homodimer.

It localises to the cytoplasm. The enzyme catalyses D-fructose 6-phosphate + L-glutamine = D-glucosamine 6-phosphate + L-glutamate. Its function is as follows. Catalyzes the first step in hexosamine metabolism, converting fructose-6P into glucosamine-6P using glutamine as a nitrogen source. The protein is Glutamine--fructose-6-phosphate aminotransferase [isomerizing] of Legionella pneumophila (strain Lens).